A 329-amino-acid chain; its full sequence is MGRTSKDKRDVYYRLAKENGWRARSAFKLLQLDKEFQLFQGVTRAVDLCAAPGSWSQVLSQKIGGQGSGHVVAVDLQAMAPLPGVVQIQGDITQLSTAKEIIQHFKGCPADLVVCDGAPDVTGLHDVDEYMQAQLLLAALNIATHVLKPGGCFVAKIFRGRDVTLLYSQLQVFFSSVLCAKPRSSRNSSIEAFAVCQGYDPPEGFIPDLSKPLLDHSYDPDFNQLDGPTRIIVPFVTCGDLSSYDSDRSYPLDLEGGSEYKYTPPTQPPISPPYQEACTLKRKGQLAKEIRPQDCPISRVDTFPQPLAAPQCHTLLAPEMEDNEMSCSP.

Residues G53, W55, D75, D91, and D116 each contribute to the S-adenosyl-L-methionine site. K156 serves as the catalytic Proton acceptor. Residues 221 to 240 (DFNQLDGPTRIIVPFVTCGD) are required for binding to WDR6. Phosphoserine is present on S271.

Belongs to the class I-like SAM-binding methyltransferase superfamily. RNA methyltransferase RlmE family. TRM7 subfamily. Interacts with WDR6; the interaction is direct, and required for 2'-O-methylation of position 34 in substrate tRNAs. Found in fetal brain, lung, liver and kidney. Widely expressed in adult tissue; with high expression in heart and liver, lower expression in skeletal muscle, kidney, and pancreas and also lowly expressed in brain and lung. In the adult brain, expressed in amygdala, caudate nucleus, corpus callosum, hippocampus and thalamus.

The protein resides in the cytoplasm. It localises to the nucleus. The catalysed reaction is cytidine(32)/guanosine(34) in tRNA + 2 S-adenosyl-L-methionine = 2'-O-methylcytidine(32)/2'-O-methylguanosine(34) in tRNA + 2 S-adenosyl-L-homocysteine + 2 H(+). With respect to regulation, inhibited by 2,6-diaminopurine (DAP); inhibition promotes UGA stop-codon readthrough during translation by misincorporation of tRNA(Trp) in the nascent polypeptide. In terms of biological role, methylates the 2'-O-ribose of nucleotides at positions 32 and 34 of the tRNA anticodon loop of substrate tRNAs. Requisite for faithful cytoplasmic translation. Requires THADA for methylation of the nucleotide at position 32 of the anticodon loop of substrate tRNAs. Requires WDR6 for methylation of the nucleotide at position 34 of the anticodon loop of substrate tRNAs. Promotes translation efficiency of the UUU codon. Plays a role in neurogenesis. Required for expression of genes involved in neurogenesis, mitochondrial translation and energy generation, and lipid biosynthesis. Requisite for RNA-mediated gene silencing. May modify position 32 in tRNA(Arg(ACG)), tRNA(Arg(CCG)), tRNA(Arg(UCG)), tRNA(Cys(GCA)), tRNA(Cys(ACA)), tRNA(Gln(CUG)), tRNA(Gln(UUG)), tRNA(Gly(CCC)), tRNA(Leu(CAG))/tRNA(Leu(CAA)), tRNA(Leu(A/IAG)), tRNA(Leu(UAG)), tRNA(Phe(GAA)), tRNA(Pro(AGG))/tRNA(Pro(CGG))/tRNA(Pro(UGG)) and tRNA(Trp(CCA)), and position 34 in tRNA(Phe(GAA)), tRNA(Leu(CAA)), tRNA(Sec(UCA)), and tRNA(Trp(CCA)). In Homo sapiens (Human), this protein is tRNA (cytidine(32)/guanosine(34)-2'-O)-methyltransferase.